A 798-amino-acid polypeptide reads, in one-letter code: Bromodomain-containing protein 2 (798 aa).

Position 1 is an N-acetylmethionine (Met1). Residues 1–21 (MLQNVTPHKLPGEGNAGLLGL) are disordered. A Phosphothreonine modification is found at Thr6. Phosphoserine is present on Ser36. Positions 53 to 72 (LQLAPANPPPPEVSNPKKPG) are disordered. Residues 73-179 (RVTNQLQYLH…KIFLQKVASM (107 aa)) enclose the Bromo 1 domain. 6 residues coordinate a protein: Asp111, Tyr154, Asn155, Lys156, Asp159, and Asp160. Disordered regions lie at residues 267 to 348 (PPAQ…LSEQ), 455 to 648 (EPLE…KRQL), and 735 to 798 (EKRL…SDSG). Over residues 284 to 297 (TTTPTPTAILAPGS) the composition is skewed to low complexity. Phosphoserine is present on residues Ser297, Ser300, and Ser304. Residues 315–331 (MRRESGRPIKPPRKDLP) show a composition bias toward basic and acidic residues. The 110-residue stretch at 343-452 (GKLSEQLKHC…DVFEFRYAKM (110 aa)) folds into the Bromo 2 domain. Residues 480–512 (SSEESSSESSSEEEEEEDEEDEEEESESSDSEE) are compositionally biased toward acidic residues. Residues 542 to 564 (KPKRKREKKEKKKKRKAEKHRGR) show a composition bias toward basic residues. A Nuclear localization signal motif is present at residues 553–557 (KKKRK). Residues 630-712 (DSEEEEESRP…SCLRKKPRKP (83 aa)) form the NET domain. The residue at position 631 (Ser631) is a Phosphoserine. Residues 637–648 (SRPMSYDEKRQL) are compositionally biased toward basic and acidic residues. Residues 772 to 792 (SASSSSSDSSSSSSSSSSSDT) show a composition bias toward low complexity.

Belongs to the BET family. In terms of assembly, homodimer. Interacts with E2F1. Interacts with (acetylated) STAT3; promoting STAT3 recruitment to chromatin. Interacts with CTCF; promoting BRD2 recruitment to chromatin.

It localises to the nucleus. The protein localises to the chromosome. Its function is as follows. Chromatin reader protein that specifically recognizes and binds histone H4 acetylated at 'Lys-5' and 'Lys-12' (H4K5ac and H4K12ac, respectively), thereby controlling gene expression and remodeling chromatin structures. Recruits transcription factors and coactivators to target gene sites, and activates RNA polymerase II machinery for transcriptional elongation. Plays a key role in genome compartmentalization via its association with CTCF and cohesin: recruited to chromatin by CTCF and promotes formation of topologically associating domains (TADs) via its ability to bind acetylated histones, contributing to CTCF boundary formation and enhancer insulation. Also recognizes and binds acetylated non-histone proteins, such as STAT3. Involved in inflammatory response by regulating differentiation of naive CD4(+) T-cells into T-helper Th17: recognizes and binds STAT3 acetylated at 'Lys-87', promoting STAT3 recruitment to chromatin. In addition to acetylated lysines, also recognizes and binds lysine residues on histones that are both methylated and acetylated on the same side chain to form N6-acetyl-N6-methyllysine (Kacme), an epigenetic mark of active chromatin associated with increased transcriptional initiation. Specifically binds histone H4 acetyl-methylated at 'Lys-5' and 'Lys-12' (H4K5acme and H4K12acme, respectively). The polypeptide is Bromodomain-containing protein 2 (Brd2) (Rattus norvegicus (Rat)).